Here is a 103-residue protein sequence, read N- to C-terminus: Urease subunit gamma (103 aa).

Belongs to the urease gamma subunit family. Heterotrimer of UreA (gamma), UreB (beta) and UreC (alpha) subunits. Three heterotrimers associate to form the active enzyme.

Its subcellular location is the cytoplasm. The catalysed reaction is urea + 2 H2O + H(+) = hydrogencarbonate + 2 NH4(+). It functions in the pathway nitrogen metabolism; urea degradation; CO(2) and NH(3) from urea (urease route): step 1/1. This Paracoccus denitrificans (strain Pd 1222) protein is Urease subunit gamma.